The chain runs to 320 residues: Serpentine receptor class gamma-15 (320 aa).

The next 7 helical transmembrane spans lie at 29–49 (TISY…TILV), 57–77 (GSSF…IVFI), 85–105 (FLYV…SSLI), 151–171 (VSLV…IISP), 197–217 (LFQS…TSVT), 240–260 (IYIS…AFCT), and 268–288 (LFTA…VILF).

It belongs to the nematode receptor-like protein srg family.

The protein localises to the membrane. The chain is Serpentine receptor class gamma-15 (srg-15) from Caenorhabditis elegans.